The chain runs to 376 residues: Neuropeptide receptor 3 (376 aa).

Residues 1 to 29 are Extracellular-facing; the sequence is MEGGRNCVMTVQQWQPEYNDMNQIRAIFS. Residues 30 to 50 form a helical membrane-spanning segment; the sequence is LLYLLVWVGAIVGNTLVLYVL. The Cytoplasmic portion of the chain corresponds to 51–66; the sequence is TFNQVSLSVRTVFVGC. A helical membrane pass occupies residues 67–87; sequence LAGSDLLMCLFSLPITAISIF. Residues 88-89 lie on the Extracellular side of the membrane; sequence SR. A helical membrane pass occupies residues 90–110; that stretch reads VWVFPAIFCKLIGVFQGGTIF. A disulfide bond links cysteine 98 and cysteine 175. At 111-139 the chain is on the cytoplasmic side; it reads VSSFTLTVIALDRCVLILRPNQEIVNFPR. Residues 140–160 traverse the membrane as a helical segment; that stretch reads AVFIVFCIWLLGYSLALPVGI. Topologically, residues 161-197 are extracellular; sequence YSDIAVYDEICGTFCEENWPDFNPDTGRSGIRRAYGL. A helical membrane pass occupies residues 198-218; sequence SVLVLQFGIPALISSICYWMI. Topologically, residues 219 to 251 are cytoplasmic; it reads SRVMSDQLARRRGHNIRPESETKLVNRKTRANR. A helical membrane pass occupies residues 252 to 272; that stretch reads MMIVMVVGFVLAWMPFNAVNL. Residues 273–284 are Extracellular-facing; sequence YRDLFGISKWYS. The chain crosses the membrane as a helical span at residues 285-305; that stretch reads TVFALCHVCAMCSAVLNPIIY. Residues 306–376 lie on the Cytoplasmic side of the membrane; that stretch reads SWFNPQFRQS…NDYRAGDQLL (71 aa).

This sequence belongs to the G-protein coupled receptor 1 family.

The protein localises to the cell membrane. In terms of biological role, G-protein coupled receptor for flp-15 neuropeptides. Receptor activation assays suggest binding to predicted flp-15 peptides, GGPQGPLRF-NH2 and RGPSGPLRF-NH2. Likely involved in Gi/Go-coupled signaling pathways. This chain is Neuropeptide receptor 3, found in Caenorhabditis elegans.